A 341-amino-acid polypeptide reads, in one-letter code: Hyaluronan and proteoglycan link protein 2 (341 aa).

An N-terminal signal peptide occupies residues 1–27 (MPSRIPLPAFCCFLLPWAFTSFHKALG). An Ig-like V-type domain is found at 35–143 (PHYLLPPIHE…GIEDESVALT (109 aa)). 5 cysteine pairs are disulfide-bonded: C58/C129, C171/C241, C195/C216, C266/C337, and C291/C312. Link domains lie at 149 to 243 (VVFP…FCFT) and 246 to 339 (LAGQ…YCYA).

Belongs to the HAPLN family. As to expression, brain. Predominantly expressed by neurons. Colocalizes with versican V2 in developing and adult cerebellar white matter and at the nodes of Ranvier.

The protein localises to the secreted. It is found in the extracellular space. The protein resides in the extracellular matrix. Its function is as follows. Mediates a firm binding of versican V2 to hyaluronic acid. May play a pivotal role in the formation of the hyaluronan-associated matrix in the central nervous system (CNS) which facilitates neuronal conduction and general structural stabilization. Binds to hyaluronic acid. The polypeptide is Hyaluronan and proteoglycan link protein 2 (Hapln2) (Mus musculus (Mouse)).